Consider the following 559-residue polypeptide: DNA primase (559 aa).

The CHC2-type zinc finger occupies 37–61 (CPFHEERSASFSVNQIKGFYHCFGC). Residues 246-327 (KQVIVTEGYL…RGGVILFENN (82 aa)) form the Toprim domain. Mg(2+)-binding residues include glutamate 252, aspartate 296, and aspartate 298.

Belongs to the DnaG primase family. Monomer. The C-terminal domain DnaB-binding domain exists as a dimer in solution. Interacts with DnaB via its C-terminal domain (residues 415-559 of DnaG); up to 3 DnaG fragments bind to a DnaB hexamer. It depends on Zn(2+) as a cofactor. Requires Mg(2+) as cofactor.

The catalysed reaction is ssDNA + n NTP = ssDNA/pppN(pN)n-1 hybrid + (n-1) diphosphate.. Functionally, RNA polymerase that catalyzes the synthesis of short RNA molecules used as primers for DNA polymerase during DNA replication. Stimulates the 5'-3' DNA helicase activity of DnaB. In Helicobacter pylori (strain ATCC 700392 / 26695) (Campylobacter pylori), this protein is DNA primase.